The chain runs to 364 residues: Appendage-associated protein (364 aa).

2 coiled-coil regions span residues 142-196 and 288-313; these read IIHE…AECR and RIAQAELAAAADALKRAADKLQALGK.

The protein resides in the secreted. Associates with actin filament appendages that are formed in the inclusion appendages of the parasitophorous vacuole during infection of the host erythrocyte. The polypeptide is Appendage-associated protein (Anaplasma marginale (strain Illinois)).